A 234-amino-acid polypeptide reads, in one-letter code: Sugar fermentation stimulation protein homolog (234 aa).

It belongs to the SfsA family.

This Enterobacter sp. (strain 638) protein is Sugar fermentation stimulation protein homolog.